Reading from the N-terminus, the 479-residue chain is tRNA-2-methylthio-N(6)-dimethylallyladenosine synthase (479 aa).

The MTTase N-terminal domain maps to 3–120; sequence KKLYIKTWGC…LPEMVNQVSE (118 aa). [4Fe-4S] cluster is bound by residues cysteine 12, cysteine 49, cysteine 83, cysteine 157, cysteine 161, and cysteine 164. One can recognise a Radical SAM core domain in the interval 143-375; it reads KADGASAFVS…QQRLNQQSMA (233 aa). The TRAM domain maps to 378-441; the sequence is RRMLETEQRI…PNSLRGELIR (64 aa).

Belongs to the methylthiotransferase family. MiaB subfamily. Monomer. [4Fe-4S] cluster is required as a cofactor.

The protein localises to the cytoplasm. The catalysed reaction is N(6)-dimethylallyladenosine(37) in tRNA + (sulfur carrier)-SH + AH2 + 2 S-adenosyl-L-methionine = 2-methylsulfanyl-N(6)-dimethylallyladenosine(37) in tRNA + (sulfur carrier)-H + 5'-deoxyadenosine + L-methionine + A + S-adenosyl-L-homocysteine + 2 H(+). Functionally, catalyzes the methylthiolation of N6-(dimethylallyl)adenosine (i(6)A), leading to the formation of 2-methylthio-N6-(dimethylallyl)adenosine (ms(2)i(6)A) at position 37 in tRNAs that read codons beginning with uridine. The chain is tRNA-2-methylthio-N(6)-dimethylallyladenosine synthase from Idiomarina loihiensis (strain ATCC BAA-735 / DSM 15497 / L2-TR).